Reading from the N-terminus, the 282-residue chain is Serine/arginine-rich splicing factor 8 (282 aa).

Serine 2 carries the post-translational modification N-acetylserine. Phosphoserine occurs at positions 2 and 26. The RRM domain maps to 14-92 (ITLKVDNLTY…RELRVQVARY (79 aa)). The disordered stretch occupies residues 91 to 282 (RYGRRDLPRS…SPEEEGQMSS (192 aa)). A compositionally biased stretch (basic and acidic residues) spans 93-107 (GRRDLPRSRQGEPRG). Composition is skewed to basic residues over residues 116 to 136 (RRSR…RSRS) and 144 to 154 (SRSRSRYRGSR). 2 stretches are compositionally biased toward low complexity: residues 155–177 (YSRS…PYSR) and 185–200 (YGGS…NSRY). Serine 156, serine 158, serine 171, serine 173, and serine 196 each carry phosphoserine. Basic residues predominate over residues 201–210 (SRYHSSRSHS). 2 stretches are compositionally biased toward low complexity: residues 211–227 (KSGS…SKSS) and 234–255 (SSSV…SPPR). Residues 256 to 271 (VSKRKSKSRSRSKRPP) show a composition bias toward basic residues. At serine 273 the chain carries Phosphoserine.

The protein belongs to the splicing factor SR family. As to expression, strongly expressed in pancreas, spleen and prostate. Weakly expressed in lung, liver and thymus.

Its subcellular location is the nucleus. Involved in pre-mRNA alternative splicing. The sequence is that of Serine/arginine-rich splicing factor 8 (SRSF8) from Homo sapiens (Human).